The sequence spans 323 residues: uncharacterized protein (323 aa).

Belongs to the glycosyltransferase 2 family.

This is an uncharacterized protein from Haemophilus influenzae (strain ATCC 51907 / DSM 11121 / KW20 / Rd).